Consider the following 197-residue polypeptide: Imidazoleglycerol-phosphate dehydratase (197 aa).

This sequence belongs to the imidazoleglycerol-phosphate dehydratase family.

The protein localises to the cytoplasm. The enzyme catalyses D-erythro-1-(imidazol-4-yl)glycerol 3-phosphate = 3-(imidazol-4-yl)-2-oxopropyl phosphate + H2O. The protein operates within amino-acid biosynthesis; L-histidine biosynthesis; L-histidine from 5-phospho-alpha-D-ribose 1-diphosphate: step 6/9. In Streptomyces coelicolor (strain ATCC BAA-471 / A3(2) / M145), this protein is Imidazoleglycerol-phosphate dehydratase (hisB).